Consider the following 35-residue polypeptide: Photosystem II reaction center protein M (35 aa).

Residues G7–I27 traverse the membrane as a helical segment.

This sequence belongs to the PsbM family. PSII is composed of 1 copy each of membrane proteins PsbA, PsbB, PsbC, PsbD, PsbE, PsbF, PsbH, PsbI, PsbJ, PsbK, PsbL, PsbM, PsbT, PsbX, PsbY, PsbZ, Psb30/Ycf12, peripheral proteins PsbO, CyanoQ (PsbQ), PsbU, PsbV and a large number of cofactors. It forms dimeric complexes.

Its subcellular location is the cellular thylakoid membrane. Its function is as follows. One of the components of the core complex of photosystem II (PSII). PSII is a light-driven water:plastoquinone oxidoreductase that uses light energy to abstract electrons from H(2)O, generating O(2) and a proton gradient subsequently used for ATP formation. It consists of a core antenna complex that captures photons, and an electron transfer chain that converts photonic excitation into a charge separation. This subunit is found at the monomer-monomer interface. This Crocosphaera subtropica (strain ATCC 51142 / BH68) (Cyanothece sp. (strain ATCC 51142)) protein is Photosystem II reaction center protein M.